The chain runs to 203 residues: Thymidylate kinase (203 aa).

10-17 contacts ATP; sequence GTEGSGKS.

Belongs to the thymidylate kinase family.

The enzyme catalyses dTMP + ATP = dTDP + ADP. Functionally, phosphorylation of dTMP to form dTDP in both de novo and salvage pathways of dTTP synthesis. The protein is Thymidylate kinase of Dichelobacter nodosus (strain VCS1703A).